We begin with the raw amino-acid sequence, 102 residues long: Large ribosomal subunit protein bL21 (102 aa).

This sequence belongs to the bacterial ribosomal protein bL21 family. In terms of assembly, part of the 50S ribosomal subunit. Contacts protein L20.

Functionally, this protein binds to 23S rRNA in the presence of protein L20. The polypeptide is Large ribosomal subunit protein bL21 (Bifidobacterium longum (strain DJO10A)).